A 483-amino-acid chain; its full sequence is Regulatory protein ViaA (483 aa).

It belongs to the ViaA family. Homodimer. Interacts with RavA.

It is found in the cytoplasm. In terms of biological role, component of the RavA-ViaA chaperone complex, which may act on the membrane to optimize the function of some of the respiratory chains. ViaA stimulates the ATPase activity of RavA. The chain is Regulatory protein ViaA from Escherichia coli O127:H6 (strain E2348/69 / EPEC).